The primary structure comprises 512 residues: Mesoderm induction early response protein 1 (512 aa).

Over residues 1–16 the composition is skewed to low complexity; sequence MAEPSVESSSPGGSAT. 2 disordered regions span residues 1 to 63 and 75 to 173; these read MAEP…REGD and YGST…EDYI. Serine 10 is modified (phosphoserine). The segment covering 17-36 has biased composition (basic and acidic residues); it reads SDDHEFDPSADMLVHDFDDE. Acidic residues-rich tracts occupy residues 37-46 and 83-105; these read RTLEEEEMME and EEDE…DNDD. The segment covering 129–144 has biased composition (polar residues); sequence QSSNDDPSQSVASQDA. Serine 141 is modified (phosphoserine). Tyrosine 155 is subject to Phosphotyrosine. Serine 160 and serine 166 each carry phosphoserine. Acidic residues predominate over residues 160 to 173; sequence SEVEEESEEDEDYI. The 99-residue stretch at 180-278 folds into the ELM2 domain; it reads KEIMVGSMFQ…EALRRLRFNV (99 aa). The interval 180–284 is interaction with HDAC1; sequence KEIMVGSMFQ…RFNVKAAREE (105 aa). Lysine 239 participates in a covalent cross-link: Glycyl lysine isopeptide (Lys-Gly) (interchain with G-Cter in SUMO2). The SANT domain maps to 283-335; the sequence is EELSVWTEEECRNFEQGLKAYGKDFHLIQANKVRTRSVGECVAFYYMWKKSER. The segment at 366–512 is disordered; that stretch reads ESESAASSRA…KFEELENTDD (147 aa). Phosphoserine occurs at positions 367, 369, and 377. A compositionally biased stretch (polar residues) spans 396–409; it reads TVSTANQNGVSSNG. Positions 414–423 are enriched in basic and acidic residues; sequence LNKEEVKVEG. Lysine 420 participates in a covalent cross-link: Glycyl lysine isopeptide (Lys-Gly) (interchain with G-Cter in SUMO2). Threonine 448 is modified (phosphothreonine). Basic and acidic residues predominate over residues 462–475; that stretch reads ARNENDFDEKSERP. Positions 482–494 are enriched in polar residues; sequence NSNGKESPGSSEF. 3 positions are modified to phosphoserine: serine 483, serine 488, and serine 491.

Interacts with HDAC1. Part of a complex containing at least CDYL, MIER1, MIER2, HDAC1 and HDAC2. In terms of tissue distribution, ubiquitously expressed, but at very low levels. However, consistent level of expression are observed in heart, testis, thyroid, ovary and adrenal gland. Transcripts are up-regulated in breast carcinoma cell lines and tumor.

Its subcellular location is the nucleus. It localises to the cytoplasm. In terms of biological role, transcriptional repressor regulating the expression of a number of genes including SP1 target genes. Probably functions through recruitment of HDAC1 a histone deacetylase involved in chromatin silencing. This chain is Mesoderm induction early response protein 1 (MIER1), found in Homo sapiens (Human).